We begin with the raw amino-acid sequence, 309 residues long: Ankyrin repeat protein VACWR203 (309 aa).

ANK repeat units follow at residues 13–44, 110–142, 160–189, 197–231, and 269–298; these read SVFKGFSDKVRKNDLDMNVVKELLSNGASLTI, KYGTPLHILASNKKLITPNYMKLLVYNGNDINA, FVYHNIEYGIRYYNEKIIDAFIELGADLTI, PVVYCIHSNAEYGYNNITNIKIIRKLLNLSRRASH, and EGRTPLHCAIQHNFTQIAKYLLDRGADIVV.

Belongs to the orthopoxviruses VACWR203 protein family.

This Bos taurus (Bovine) protein is Ankyrin repeat protein VACWR203.